A 64-amino-acid polypeptide reads, in one-letter code: Large ribosomal subunit protein bL35 (64 aa).

Residues 1–64 form a disordered region; sequence MPKNKTNSGA…RKSIKKLLGK (64 aa).

It belongs to the bacterial ribosomal protein bL35 family.

The sequence is that of Large ribosomal subunit protein bL35 from Beutenbergia cavernae (strain ATCC BAA-8 / DSM 12333 / CCUG 43141 / JCM 11478 / NBRC 16432 / NCIMB 13614 / HKI 0122).